The following is a 324-amino-acid chain: GTPase Era (324 aa).

Residues 31-199 form the Era-type G domain; that stretch reads KSGFIGIIGR…QELLVEHLEH (169 aa). Residues 39–46 are G1; it reads GRPNVGKS. 39–46 is a GTP binding site; it reads GRPNVGKS. Residues 65–69 form a G2 region; sequence QTTRN. The interval 86–89 is G3; the sequence is DTPG. GTP is bound by residues 86–90 and 148–151; these read DTPGI and NKVD. The tract at residues 148-151 is G4; that stretch reads NKVD. The tract at residues 178–180 is G5; the sequence is FSA. Positions 230 to 306 constitute a KH type-2 domain; that stretch reads TREEVPHSVA…YLELFVKVQP (77 aa).

It belongs to the TRAFAC class TrmE-Era-EngA-EngB-Septin-like GTPase superfamily. Era GTPase family. In terms of assembly, monomer.

It localises to the cytoplasm. It is found in the cell inner membrane. Its function is as follows. An essential GTPase that binds both GDP and GTP, with rapid nucleotide exchange. Plays a role in 16S rRNA processing and 30S ribosomal subunit biogenesis and possibly also in cell cycle regulation and energy metabolism. This chain is GTPase Era, found in Nostoc sp. (strain PCC 7120 / SAG 25.82 / UTEX 2576).